Here is a 311-residue protein sequence, read N- to C-terminus: MIFVITVLSGGTGTPKLLQGLKRVVNNEELAVIVNTGEDTWIGDLYLSPDVDTVLYTLADLINEETWYGVKEDTFYTHEQLKNLGFDEVLRIGDKDRALKMHKTYYLKRGHKLSEVVDMEKVALGIKAKVIPMTDDRVETKILAKVDGKVDLLKFHDFWVKRKGDVEVLDVIYENSLYAKPCEKAVEAIKNSDLVIIGPSNPITSIGPILSLNGIKELLKDKKVVVVSPIVGNSAVSGPAGKLMKAKGYDVSVKGIYEFYKDIVDVLVIDNVDKEIAKEIPCEVLITNTIMKTLDDKVRLAKNIIEFCGSL.

7,8-didemethyl-8-hydroxy-5-deazariboflavin-binding residues include Asp-52 and Arg-91.

Belongs to the CofD family. As to quaternary structure, homodimer. The cofactor is Mg(2+).

It catalyses the reaction (2S)-lactyl-2-diphospho-5'-guanosine + 7,8-didemethyl-8-hydroxy-5-deazariboflavin = oxidized coenzyme F420-0 + GMP + H(+). It functions in the pathway cofactor biosynthesis; coenzyme F420 biosynthesis. With respect to regulation, inhibited by EDTA in vitro. In terms of biological role, catalyzes the transfer of the 2-phospholactate moiety from (2S)-lactyl-2-diphospho-5'-guanosine to 7,8-didemethyl-8-hydroxy-5-deazariboflavin (FO) with the formation of oxidized coenzyme F420-0 and GMP. In Methanocaldococcus jannaschii (strain ATCC 43067 / DSM 2661 / JAL-1 / JCM 10045 / NBRC 100440) (Methanococcus jannaschii), this protein is 2-phospho-L-lactate transferase.